A 221-amino-acid chain; its full sequence is GTP-binding nuclear protein Ran-2 (221 aa).

The Small GTPase Ran-type domain occupies 10-174; that stretch reads DYPSFKLVIV…LYLARKLAGD (165 aa). Residue 21–28 participates in GTP binding; that stretch reads DGGTGKTT. Residues 40–48 are switch-I; the sequence is KKYEPTIGV. GTP contacts are provided by residues Gly71, 125–128, and 153–155; these read NKVD and SAK. The tract at residues 71–87 is switch-II; that stretch reads GQEKFGGLRDGYYIHGQ.

It belongs to the small GTPase superfamily. Ran family. As to quaternary structure, found in a nuclear export complex with RanGTP, exportin and pre-miRNA.

It is found in the nucleus. Its function is as follows. GTP-binding protein involved in nucleocytoplasmic transport. Required for the import of protein into the nucleus and also for RNA export. Involved in chromatin condensation and control of cell cycle. This is GTP-binding nuclear protein Ran-2 (RAN2) from Oryza sativa subsp. indica (Rice).